A 121-amino-acid chain; its full sequence is UPF0344 protein BC_1150 (121 aa).

Helical transmembrane passes span 6 to 26 (ITAW…YSAG), 38 to 58 (LMYI…VKTA), 65 to 85 (WYGL…MVLV), and 92 to 112 (PTGA…YLGL).

The protein belongs to the UPF0344 family.

It is found in the cell membrane. The protein is UPF0344 protein BC_1150 of Bacillus cereus (strain ATCC 14579 / DSM 31 / CCUG 7414 / JCM 2152 / NBRC 15305 / NCIMB 9373 / NCTC 2599 / NRRL B-3711).